Here is a 166-residue protein sequence, read N- to C-terminus: Spiderine-1b (166 aa).

The first 18 residues, 1 to 18 (MKFALVLLGICAFYLVNA), serve as a signal peptide directing secretion. The propeptide at 19 to 58 (TGDLETELEASELQELQEALDLIGETSLESLEAEELEEAR) is removed in mature form. Residues 59–99 (KFKWGKLFSAAKKLYKKGKKLSKNKNFKKALKFGKQLAKNL) form a linear cationic cytotoxin domain region. One can recognise an Oxytoxin-type inhibitor cystine knot (ICK) domain in the interval 113-166 (NNKCWAIGTTCSDDCDCCPEHHCHCPAGKWLPGLFRCTCQVTESDKVNKCPPAE). 5 disulfide bridges follow: Cys-116-Cys-130, Cys-123-Cys-135, Cys-127-Cys-162, Cys-129-Cys-151, and Cys-137-Cys-149.

This sequence belongs to the spiderine family. Cationic/spiderine subfamily. As to expression, expressed by the venom gland.

It is found in the secreted. Its function is as follows. Has antimicrobial, insecticidal, cytolytic and cytotoxic activity. The chain is Spiderine-1b from Oxyopes takobius (Lynx spider).